Consider the following 274-residue polypeptide: 2,3,4,5-tetrahydropyridine-2,6-dicarboxylate N-succinyltransferase (274 aa).

Substrate is bound by residues R104 and D141.

Belongs to the transferase hexapeptide repeat family. In terms of assembly, homotrimer.

The protein resides in the cytoplasm. It carries out the reaction (S)-2,3,4,5-tetrahydrodipicolinate + succinyl-CoA + H2O = (S)-2-succinylamino-6-oxoheptanedioate + CoA. The protein operates within amino-acid biosynthesis; L-lysine biosynthesis via DAP pathway; LL-2,6-diaminopimelate from (S)-tetrahydrodipicolinate (succinylase route): step 1/3. The sequence is that of 2,3,4,5-tetrahydropyridine-2,6-dicarboxylate N-succinyltransferase from Shewanella sediminis (strain HAW-EB3).